The primary structure comprises 297 residues: Palmitoyl-protein thioesterase ABHD10, mitochondrial (297 aa).

A mitochondrion-targeting transit peptide spans 1–43; that stretch reads MAAWAPCRRWGWAAVSFGRHPGLSASLARKPPRAWWLSACRQK. Residues 69–196 form the AB hydrolase-1 domain; sequence IIFIPGYLSN…EIEMKGEWTL (128 aa). Residues S143, D240, and H270 each act as charge relay system in the active site.

This sequence belongs to the AB hydrolase superfamily.

Its subcellular location is the mitochondrion. It catalyses the reaction S-hexadecanoyl-L-cysteinyl-[protein] + H2O = L-cysteinyl-[protein] + hexadecanoate + H(+). It carries out the reaction mycophenolic acid O-acyl-beta-D-glucuronide + H2O = mycophenolate + D-glucuronate + H(+). Its activity is regulated as follows. Inhibited by palmostatin-B. In terms of biological role, acts as an acyl-protein thioesterase that hydrolyzes fatty acids from acylated residues in proteins. Regulates the mitochondrial S-depalmitoylation of the nucleophilic active site residue of peroxiredoxin-5/PRDX5, a key antioxidant protein, therefore modulating mitochondrial antioxidant ability. Also catalyzes the deglucuronidation of mycophenolic acid acyl-glucuronide, an active metabolite of the immunosuppressant drug mycophenolate. In Mus musculus (Mouse), this protein is Palmitoyl-protein thioesterase ABHD10, mitochondrial.